A 549-amino-acid chain; its full sequence is Neurofilament light polypeptide (549 aa).

An N-acetylserine modification is found at S2. The head stretch occupies residues 2 to 92 (SSFYSEPYYS…KSIRTQEKAQ (91 aa)). The O-linked (GlcNAc) threonine glycan is linked to T21. An Asymmetric dimethylarginine; alternate modification is found at R23. Residue R23 is modified to Omega-N-methylarginine; alternate. S27 is a glycosylation site (O-linked (GlcNAc) serine). At R30 the chain carries Omega-N-methylarginine. Phosphotyrosine is present on Y43. Phosphoserine occurs at positions 56, 66, and 102. An IF rod domain is found at 89–400 (EKAQLQDLND…KLLEGEETRL (312 aa)). The coil 1A stretch occupies residues 93-124 (LQDLNDRFASFIERVHELEQQNKVLEAQLLVL). A linker 1 region spans residues 125-137 (RQKHSEPSRFRAL). Residues 138 to 233 (YEQEIRDLRL…KVHEEEIAEL (96 aa)) are coil 1B. Positions 234 to 252 (QAQIQYAQISVEMDVSSKP) are linker 12. The tract at residues 253–271 (DLSAALKDIRAQYEKLAAK) is coil 2A. Residues 272–280 (NMQNAEEWF) are linker 2. Residues 281-396 (KSRFTVLTES…AAYRKLLEGE (116 aa)) form a coil 2B region. The tract at residues 381 to 391 (ALDIEIAAYRK) is epitope; recognized by IF-specific monoclonal antibody. The interval 397-443 (ETRLSFTSVGSLTTGYSQSSQVFGRSAYGGLQTSSYLMSTRSFPSYY) is tail, subdomain A. A tail region spans residues 397–549 (ETRLSFTSVG…GEEQATKKKD (153 aa)). The interval 444–549 (TSHVQEEQIE…GEEQATKKKD (106 aa)) is tail, subdomain B (acidic). Positions 462–549 (KAEEAKDEPP…GEEQATKKKD (88 aa)) are disordered. Positions 471-534 (PSEGEAEEEG…ETKEAEEEEK (64 aa)) are enriched in acidic residues. S472 is subject to Phosphoserine. T526 bears the Phosphothreonine mark. The segment covering 535 to 549 (KDEGAGEEQATKKKD) has biased composition (basic and acidic residues).

It belongs to the intermediate filament family. As to quaternary structure, forms homodimers (in vitro). Forms heterodimers with NEFH or NEFM; which can further hetero-oligomerize (in vitro). Forms heterodimers with INA (in vitro). Interacts with ARHGEF28. Interacts with TRIM2. O-glycosylated. Post-translationally, phosphorylated in the head and rod regions by the PKC kinase PKN1, leading to the inhibition of polymerization. In terms of processing, ubiquitinated in the presence of TRIM2 and UBE2D1.

The protein localises to the cell projection. The protein resides in the axon. Its subcellular location is the cytoplasm. It is found in the cytoskeleton. Neurofilaments usually contain three intermediate filament proteins: NEFL, NEFM, and NEFH which are involved in the maintenance of neuronal caliber. May additionally cooperate with the neuronal intermediate filament proteins PRPH and INA to form neuronal filamentous networks. This is Neurofilament light polypeptide (NEFL) from Sus scrofa (Pig).